The primary structure comprises 367 residues: Riboflavin biosynthesis protein VVA0006 (367 aa).

A GTP-binding site is contributed by 215-219 (RLHSE). Positions 220, 231, and 233 each coordinate Zn(2+). Residues Q236, 258–260 (EGR), and T280 each bind GTP. D292 acts as the Proton acceptor in catalysis. R294 (nucleophile) is an active-site residue. Residues T315 and K320 each coordinate GTP.

The protein in the N-terminal section; belongs to the YbiA family. It in the C-terminal section; belongs to the GTP cyclohydrolase II family. Requires Zn(2+) as cofactor.

It catalyses the reaction 2,5-diamino-6-hydroxy-4-(5-phosphoribosylamino)-pyrimidine + H2O = 2,5,6-triamino-4-hydroxypyrimidine + D-ribose 5-phosphate. It carries out the reaction 5-amino-6-(5-phospho-D-ribosylamino)uracil + H2O = 5,6-diaminouracil + D-ribose 5-phosphate. The enzyme catalyses GTP + 4 H2O = 2,5-diamino-6-hydroxy-4-(5-phosphoribosylamino)-pyrimidine + formate + 2 phosphate + 3 H(+). It participates in cofactor biosynthesis; riboflavin biosynthesis; 5-amino-6-(D-ribitylamino)uracil from GTP: step 1/4. Functionally, catalyzes the hydrolysis of the N-glycosidic bond in the first two intermediates of riboflavin biosynthesis, which are highly reactive metabolites, yielding relatively innocuous products. Thus, can divert a surplus of harmful intermediates into relatively harmless products and pre-empt the damage these intermediates would otherwise do. Has no activity against GTP, nucleoside monophosphates or ADP-ribose. Catalyzes the conversion of GTP to 2,5-diamino-6-ribosylamino-4(3H)-pyrimidinone 5'-phosphate (DARP), formate and pyrophosphate. This is Riboflavin biosynthesis protein VVA0006 from Vibrio vulnificus (strain YJ016).